The sequence spans 316 residues: Ribosomal RNA small subunit methyltransferase H (316 aa).

S-adenosyl-L-methionine is bound by residues 39–41 (GGH), aspartate 56, phenylalanine 82, aspartate 103, and glutamine 110.

Belongs to the methyltransferase superfamily. RsmH family.

The protein resides in the cytoplasm. It carries out the reaction cytidine(1402) in 16S rRNA + S-adenosyl-L-methionine = N(4)-methylcytidine(1402) in 16S rRNA + S-adenosyl-L-homocysteine + H(+). Its function is as follows. Specifically methylates the N4 position of cytidine in position 1402 (C1402) of 16S rRNA. This Methylacidiphilum infernorum (isolate V4) (Methylokorus infernorum (strain V4)) protein is Ribosomal RNA small subunit methyltransferase H.